The following is a 453-amino-acid chain: Bifunctional protein GlmU (453 aa).

The tract at residues 1 to 231 (MERSSLAVIL…EKELTGCNNR (231 aa)) is pyrophosphorylase. UDP-N-acetyl-alpha-D-glucosamine-binding positions include 10–13 (LAAG), K24, Q77, 82–83 (GT), 105–107 (YGD), G143, E157, N172, and N229. D107 is a binding site for Mg(2+). N229 lines the Mg(2+) pocket. The tract at residues 232–252 (AELAFIERLWQERRRHELMVD) is linker. Residues 253–453 (GVSMIAPETV…AQKEAKKKSS (201 aa)) are N-acetyltransferase. The UDP-N-acetyl-alpha-D-glucosamine site is built by R318 and K336. H348 serves as the catalytic Proton acceptor. The UDP-N-acetyl-alpha-D-glucosamine site is built by Y351 and N362. Acetyl-CoA-binding positions include A365, 371 to 372 (NY), S390, S408, and R425.

It in the N-terminal section; belongs to the N-acetylglucosamine-1-phosphate uridyltransferase family. This sequence in the C-terminal section; belongs to the transferase hexapeptide repeat family. As to quaternary structure, homotrimer. It depends on Mg(2+) as a cofactor.

It localises to the cytoplasm. It carries out the reaction alpha-D-glucosamine 1-phosphate + acetyl-CoA = N-acetyl-alpha-D-glucosamine 1-phosphate + CoA + H(+). The catalysed reaction is N-acetyl-alpha-D-glucosamine 1-phosphate + UTP + H(+) = UDP-N-acetyl-alpha-D-glucosamine + diphosphate. Its pathway is nucleotide-sugar biosynthesis; UDP-N-acetyl-alpha-D-glucosamine biosynthesis; N-acetyl-alpha-D-glucosamine 1-phosphate from alpha-D-glucosamine 6-phosphate (route II): step 2/2. The protein operates within nucleotide-sugar biosynthesis; UDP-N-acetyl-alpha-D-glucosamine biosynthesis; UDP-N-acetyl-alpha-D-glucosamine from N-acetyl-alpha-D-glucosamine 1-phosphate: step 1/1. It functions in the pathway bacterial outer membrane biogenesis; LPS lipid A biosynthesis. In terms of biological role, catalyzes the last two sequential reactions in the de novo biosynthetic pathway for UDP-N-acetylglucosamine (UDP-GlcNAc). The C-terminal domain catalyzes the transfer of acetyl group from acetyl coenzyme A to glucosamine-1-phosphate (GlcN-1-P) to produce N-acetylglucosamine-1-phosphate (GlcNAc-1-P), which is converted into UDP-GlcNAc by the transfer of uridine 5-monophosphate (from uridine 5-triphosphate), a reaction catalyzed by the N-terminal domain. The polypeptide is Bifunctional protein GlmU (Agrobacterium fabrum (strain C58 / ATCC 33970) (Agrobacterium tumefaciens (strain C58))).